A 185-amino-acid chain; its full sequence is UPF0397 protein LGAS_1499 (185 aa).

5 consecutive transmembrane segments (helical) span residues 6 to 26 (GLSV…VILA), 46 to 66 (FLAL…GFIG), 78 to 98 (TWWS…LYGM), 118 to 138 (VQII…DILI), and 147 to 167 (FLQG…LGTI).

Belongs to the UPF0397 family.

It localises to the cell membrane. The sequence is that of UPF0397 protein LGAS_1499 from Lactobacillus gasseri (strain ATCC 33323 / DSM 20243 / BCRC 14619 / CIP 102991 / JCM 1131 / KCTC 3163 / NCIMB 11718 / NCTC 13722 / AM63).